The chain runs to 371 residues: Histidinol-phosphate aminotransferase (371 aa).

K227 is subject to N6-(pyridoxal phosphate)lysine.

The protein belongs to the class-II pyridoxal-phosphate-dependent aminotransferase family. Histidinol-phosphate aminotransferase subfamily. Homodimer. The cofactor is pyridoxal 5'-phosphate.

It catalyses the reaction L-histidinol phosphate + 2-oxoglutarate = 3-(imidazol-4-yl)-2-oxopropyl phosphate + L-glutamate. The protein operates within amino-acid biosynthesis; L-histidine biosynthesis; L-histidine from 5-phospho-alpha-D-ribose 1-diphosphate: step 7/9. The polypeptide is Histidinol-phosphate aminotransferase (Sphingopyxis alaskensis (strain DSM 13593 / LMG 18877 / RB2256) (Sphingomonas alaskensis)).